A 212-amino-acid chain; its full sequence is Probable nicotinate-nucleotide adenylyltransferase (212 aa).

Belongs to the NadD family.

The enzyme catalyses nicotinate beta-D-ribonucleotide + ATP + H(+) = deamido-NAD(+) + diphosphate. It functions in the pathway cofactor biosynthesis; NAD(+) biosynthesis; deamido-NAD(+) from nicotinate D-ribonucleotide: step 1/1. Functionally, catalyzes the reversible adenylation of nicotinate mononucleotide (NaMN) to nicotinic acid adenine dinucleotide (NaAD). The chain is Probable nicotinate-nucleotide adenylyltransferase from Mycobacterium avium (strain 104).